Consider the following 499-residue polypeptide: Acetylcholine receptor subunit alpha-type acr-16 (499 aa).

Positions 1–19 (MSSVCALLLSCALFLVAHG) are cleaved as a signal peptide. The Extracellular segment spans residues 20–232 (SLQERRLYED…LHMRRRTLYY (213 aa)). Residues N43 and N93 are each glycosylated (N-linked (GlcNAc...) asparagine). 2 cysteine pairs are disulfide-bonded: C147-C161 and C211-C212. Transmembrane regions (helical) follow at residues 233-253 (GFNLIMPCILTTLMTLLGFTL), 261-281 (ITLQITVLLSICFFLSIVSEM), and 289-309 (VPLLGIFFTCCMIVVTASTVF). The Cytoplasmic segment spans residues 310–473 (TVYVLNLHYR…WKFAAMVVDR (164 aa)). The chain crosses the membrane as a helical span at residues 474–494 (LCLYVFTIFIIASTIGIFWSA). Residues 495 to 499 (PYLVA) are Extracellular-facing.

The protein belongs to the ligand-gated ion channel (TC 1.A.9) family. Acetylcholine receptor (TC 1.A.9.1) subfamily.

It is found in the postsynaptic cell membrane. The protein resides in the cell membrane. Functionally, after binding acetylcholine, the AChR responds by an extensive change in conformation that affects all subunits and leads to opening of an ion-conducting channel across the plasma membrane. A subunit of the levamisole-insensitive nicotinic receptor. This Caenorhabditis briggsae protein is Acetylcholine receptor subunit alpha-type acr-16.